The chain runs to 252 residues: MRIKGKTAKYLQKLIDEGQPIHFSLIDPDKVKDIQSLSKVASSLFKAGTSAFLIGGTLGVSKEKLDSILSVLQDFSVPKIIFPSNINLISEKADAILFMSLLNSDDLYYVIGAQVSASIIVKTIGLEPIPTGYLIVGHGGTAAHIGRARVVPYDNPELAVAYALAAEYMGMEYLYLEAGSGAPDTVRPEMVKFVSKYSEINLIVGGGIRTPERAVELVKAGAKALVTGNVIETDIERAIKIIEAMQRVYRIE.

The Mg(2+) site is built by Asp-27 and Thr-57. Residues 175 to 181, 206 to 207, and 228 to 229 each bind sn-glycerol 1-phosphate; these read YLEAGSG, GG, and GN.

It belongs to the GGGP/HepGP synthase family. Group II subfamily. Mg(2+) is required as a cofactor.

Its subcellular location is the cytoplasm. It carries out the reaction sn-glycerol 1-phosphate + (2E,6E,10E)-geranylgeranyl diphosphate = sn-3-O-(geranylgeranyl)glycerol 1-phosphate + diphosphate. It functions in the pathway membrane lipid metabolism; glycerophospholipid metabolism. In terms of biological role, prenyltransferase that catalyzes the transfer of the geranylgeranyl moiety of geranylgeranyl diphosphate (GGPP) to the C3 hydroxyl of sn-glycerol-1-phosphate (G1P). This reaction is the first ether-bond-formation step in the biosynthesis of archaeal membrane lipids. This is Geranylgeranylglyceryl phosphate synthase from Metallosphaera sedula (strain ATCC 51363 / DSM 5348 / JCM 9185 / NBRC 15509 / TH2).